Here is a 285-residue protein sequence, read N- to C-terminus: Probable endonuclease 4 (285 aa).

Zn(2+) is bound by residues histidine 69, histidine 109, glutamate 145, aspartate 179, histidine 182, histidine 216, aspartate 229, histidine 231, and glutamate 261.

This sequence belongs to the AP endonuclease 2 family. It depends on Zn(2+) as a cofactor.

It carries out the reaction Endonucleolytic cleavage to 5'-phosphooligonucleotide end-products.. Its function is as follows. Endonuclease IV plays a role in DNA repair. It cleaves phosphodiester bonds at apurinic or apyrimidinic (AP) sites, generating a 3'-hydroxyl group and a 5'-terminal sugar phosphate. This Shigella flexneri serotype 5b (strain 8401) protein is Probable endonuclease 4.